The sequence spans 500 residues: Aspartyl/glutamyl-tRNA(Asn/Gln) amidotransferase subunit B (500 aa).

Belongs to the GatB/GatE family. GatB subfamily. Heterotrimer of A, B and C subunits.

The catalysed reaction is L-glutamyl-tRNA(Gln) + L-glutamine + ATP + H2O = L-glutaminyl-tRNA(Gln) + L-glutamate + ADP + phosphate + H(+). It catalyses the reaction L-aspartyl-tRNA(Asn) + L-glutamine + ATP + H2O = L-asparaginyl-tRNA(Asn) + L-glutamate + ADP + phosphate + 2 H(+). In terms of biological role, allows the formation of correctly charged Asn-tRNA(Asn) or Gln-tRNA(Gln) through the transamidation of misacylated Asp-tRNA(Asn) or Glu-tRNA(Gln) in organisms which lack either or both of asparaginyl-tRNA or glutaminyl-tRNA synthetases. The reaction takes place in the presence of glutamine and ATP through an activated phospho-Asp-tRNA(Asn) or phospho-Glu-tRNA(Gln). The protein is Aspartyl/glutamyl-tRNA(Asn/Gln) amidotransferase subunit B of Rhizobium meliloti (strain 1021) (Ensifer meliloti).